The following is a 955-amino-acid chain: 2-oxoglutarate dehydrogenase E1 component (955 aa).

This sequence belongs to the alpha-ketoglutarate dehydrogenase family. Homodimer. Part of the 2-oxoglutarate dehydrogenase (OGDH) complex composed of E1 (2-oxoglutarate dehydrogenase), E2 (dihydrolipoamide succinyltransferase) and E3 (dihydrolipoamide dehydrogenase); the complex contains multiple copies of the three enzymatic components (E1, E2 and E3). It depends on thiamine diphosphate as a cofactor.

It catalyses the reaction N(6)-[(R)-lipoyl]-L-lysyl-[protein] + 2-oxoglutarate + H(+) = N(6)-[(R)-S(8)-succinyldihydrolipoyl]-L-lysyl-[protein] + CO2. E1 component of the 2-oxoglutarate dehydrogenase (OGDH) complex which catalyzes the decarboxylation of 2-oxoglutarate, the first step in the conversion of 2-oxoglutarate to succinyl-CoA and CO(2). This Bacillus anthracis (strain A0248) protein is 2-oxoglutarate dehydrogenase E1 component.